Here is a 33-residue protein sequence, read N- to C-terminus: U13-ctenitoxin-Pn1c (33 aa).

Intrachain disulfides connect cysteine 3/cysteine 17, cysteine 10/cysteine 21, and cysteine 16/cysteine 30.

Expressed by the venom gland.

It localises to the secreted. Its function is as follows. Acts as a neurotoxin. The protein is U13-ctenitoxin-Pn1c of Phoneutria nigriventer (Brazilian armed spider).